We begin with the raw amino-acid sequence, 627 residues long: UvrABC system protein C (627 aa).

The 80-residue stretch at 26-105 folds into the GIY-YIG domain; it reads PEPGVYFMRD…IKQHQPYFNV (80 aa). The UVR domain maps to 215-250; it reads QELIDILSEQMEKAAEALNFEVAARIRDQIAGLKSL.

The protein belongs to the UvrC family. In terms of assembly, interacts with UvrB in an incision complex.

Its subcellular location is the cytoplasm. In terms of biological role, the UvrABC repair system catalyzes the recognition and processing of DNA lesions. UvrC both incises the 5' and 3' sides of the lesion. The N-terminal half is responsible for the 3' incision and the C-terminal half is responsible for the 5' incision. This Nostoc sp. (strain PCC 7120 / SAG 25.82 / UTEX 2576) protein is UvrABC system protein C.